Consider the following 325-residue polypeptide: Geranylgeranyl transferase type-2 subunit beta (325 aa).

6 PFTB repeats span residues 9 to 50 (KEKH…CVLD), 57 to 99 (KEEV…ATYD), 109 to 150 (KVRL…SILG), 157 to 198 (VDPA…AIAN), 208 to 249 (LEEI…AIIG), and 256 to 298 (YEKL…SLMG). Geranylgeranyl diphosphate contacts are provided by residues 183-185 (HAA) and 228-240 (RPSK…YSWW). Zn(2+) is bound by residues Asp234, Cys236, and His286.

Belongs to the protein prenyltransferase subunit beta family. In terms of assembly, heterodimer of an alpha and a beta subunit. Zn(2+) is required as a cofactor.

The enzyme catalyses geranylgeranyl diphosphate + L-cysteinyl-[protein] = S-geranylgeranyl-L-cysteinyl-[protein] + diphosphate. Its function is as follows. Catalyzes the transfer of a geranyl-geranyl moiety from geranyl-geranyl pyrophosphate to proteins having the C-terminal -XCC or -XCXC, where both cysteines may become modified. Acts on YPT1 and SEC4. The sequence is that of Geranylgeranyl transferase type-2 subunit beta (BET2) from Saccharomyces cerevisiae (strain ATCC 204508 / S288c) (Baker's yeast).